The chain runs to 52 residues: Light-harvesting protein B-880 alpha chain (52 aa).

Residues 1 to 12 lie on the Cytoplasmic side of the membrane; the sequence is MWKVWLLFDPRR. The helical transmembrane segment at 13–33 threads the bilayer; the sequence is TLVALFTFLFVLALLIHFILL. Histidine 29 is a binding site for a bacteriochlorophyll. The Periplasmic portion of the chain corresponds to 34–52; the sequence is STDRFNWMQGAPTAPAQTS.

The protein belongs to the antenna complex alpha subunit family. The core complex is formed by different alpha and beta chains, binding bacteriochlorophyll molecules, and arranged most probably in tetrameric structures disposed around the reaction center. The non-pigmented gamma chains may constitute additional components.

The protein localises to the cell inner membrane. In terms of biological role, antenna complexes are light-harvesting systems, which transfer the excitation energy to the reaction centers. In Afifella marina (Rhodobium marinum), this protein is Light-harvesting protein B-880 alpha chain.